The primary structure comprises 187 residues: UPF0301 protein Ppha_2142 (187 aa).

The protein belongs to the UPF0301 (AlgH) family.

This Pelodictyon phaeoclathratiforme (strain DSM 5477 / BU-1) protein is UPF0301 protein Ppha_2142.